We begin with the raw amino-acid sequence, 450 residues long: Cyclin-A2-3 (450 aa).

2 disordered regions span residues 18-53 (ALRA…NKRK) and 75-94 (NSKQ…SQLA). The segment covering 23 to 34 (EVTSTTQNQQRV) has biased composition (polar residues).

Belongs to the cyclin family. Cyclin AB subfamily. In terms of assembly, interacts with CDKA-1. Interacts with SAMBA.

It is found in the nucleus. Functionally, negatively regulates endocycles and acts as a regulator of ploidy levels in endoreduplication. Promotes divisions in the guard cells (GCs) after the guard mother cells (GMC) symmetric division. The sequence is that of Cyclin-A2-3 (CYCA2-3) from Arabidopsis thaliana (Mouse-ear cress).